We begin with the raw amino-acid sequence, 430 residues long: Glycine reductase complex component B subunits alpha and beta (430 aa).

The active-site Schiff-base intermediate with substrate; via pyruvic acid is the C242. At C242 the chain carries Pyruvic acid (Cys).

In terms of assembly, heterohexamer of two alpha, two beta and two gamma subunits. Component of the glycine reductase complex, together with components A and C. PB is substrate specific. In terms of processing, the peptide chain is cleaved into beta and alpha chains, and the alpha chain N-terminal cysteine is deaminated and oxidized to form a reactive pyruvoyl group.

The enzyme catalyses acetyl phosphate + [thioredoxin]-disulfide + NH4(+) + H2O = [thioredoxin]-dithiol + glycine + phosphate + H(+). Functionally, in the first step of glycine reductase, the substrate is bound to component PB via a Schiff base intermediate. Then the PB-activated substrate is nucleophilically attacked by the selenol anion of component PA to transform it to a carboxymethylated selenoether and the respective amine. By action of component PC, acetyl phosphate is formed, leaving component PA in its oxidized state. Finally component PA becomes reduced by the thioredoxin system to start a new catalytic cycle of reductive deamination. The polypeptide is Glycine reductase complex component B subunits alpha and beta (grdE) (Acetoanaerobium sticklandii (strain ATCC 12662 / DSM 519 / JCM 1433 / CCUG 9281 / NCIMB 10654 / HF) (Clostridium sticklandii)).